Reading from the N-terminus, the 256-residue chain is Complex I assembly factor TIMMDC1, mitochondrial (256 aa).

The segment at 1–27 is disordered; sequence MAQSDPPKSPDPPLPTSIRNPQTPESG. The next 2 helical transmembrane spans lie at 111 to 131 and 159 to 179; these read WGWR…GLTV and VGLL…GALI.

Belongs to the Tim17/Tim22/Tim23 family. In terms of assembly, associates with the intermediate 315 kDa subcomplex of incompletely assembled complex I.

It localises to the mitochondrion membrane. In terms of biological role, chaperone protein involved in the assembly of the mitochondrial NADH:ubiquinone oxidoreductase complex (complex I). Participates in constructing the membrane arm of complex I. The chain is Complex I assembly factor TIMMDC1, mitochondrial (timmdc1) from Xenopus laevis (African clawed frog).